The sequence spans 344 residues: AA9 family lytic polysaccharide monooxygenase D (344 aa).

The first 23 residues, 1–23 (MKTATSYAAFLLSALAALPHASA), serve as a signal peptide directing secretion. H24 provides a ligand contact to Cu(2+). A disulfide bridge links C70 with C193. Position 179 (H179) interacts with O2. Residue Y190 participates in Cu(2+) binding. N201 and N207 each carry an N-linked (GlcNAc...) asparagine glycan. Residues 240-321 (PPLSNLVSGD…PTTSGNLSAN (82 aa)) are disordered. Over residues 259–292 (STSSATLSGGAAPTGTASGSTPAGTSQPSSTTGT) the composition is skewed to low complexity. Positions 311-320 (APTTSGNLSA) are enriched in polar residues. The N-linked (GlcNAc...) asparagine glycan is linked to N317.

It belongs to the polysaccharide monooxygenase AA9 family. The cofactor is Cu(2+).

The protein resides in the secreted. It carries out the reaction [(1-&gt;4)-beta-D-glucosyl]n+m + reduced acceptor + O2 = 4-dehydro-beta-D-glucosyl-[(1-&gt;4)-beta-D-glucosyl]n-1 + [(1-&gt;4)-beta-D-glucosyl]m + acceptor + H2O.. Its function is as follows. Lytic polysaccharide monooxygenase (LPMO) that depolymerizes crystalline and amorphous polysaccharides via the oxidation of scissile alpha- or beta-(1-4)-glycosidic bonds, yielding C1 or C4 oxidation products. Catalysis by LPMOs requires the reduction of the active-site copper from Cu(II) to Cu(I) by a reducing agent and H(2)O(2) or O(2) as a cosubstrate. This Gloeophyllum trabeum (strain ATCC 11539 / FP-39264 / Madison 617) (Brown rot fungus) protein is AA9 family lytic polysaccharide monooxygenase D.